Consider the following 567-residue polypeptide: tRNA(His) guanylyltransferase 1 (567 aa).

Mg(2+) contacts are provided by Asp342, Gly343, and Asp389. GTP-binding positions include 342 to 347 (DGCHFH) and 388 to 389 (SD). Residues Lys397 and Lys403 each participate in a glycyl lysine isopeptide (Lys-Gly) (interchain with G-Cter in ubiquitin) cross-link.

Belongs to the tRNA(His) guanylyltransferase family. Requires Mg(2+) as cofactor.

It localises to the nucleus. The protein localises to the nucleoplasm. The enzyme catalyses a 5'-end ribonucleotide-tRNA(His) + GTP + ATP + H2O = a 5'-end phospho-guanosine-ribonucleotide-tRNA(His) + AMP + 2 diphosphate + H(+). Functionally, adds a GMP to the 5'-end of tRNA(His) after transcription and RNase P cleavage. In Arabidopsis thaliana (Mouse-ear cress), this protein is tRNA(His) guanylyltransferase 1 (THG1).